A 180-amino-acid polypeptide reads, in one-letter code: MSKLNLEKKLKIVKEAKKLNIKKSTYLANKYDISVDTVESLVNRFEAFRIEGLINKEKKPYYSAKLKLKIVLYKLETNHSYDEVAKKFNIIYSSTIAGWVKKYREYGFLGLNNNIGRPKKIMKNPNKKPAKIKKSQVKINNDQQIKELKEQVEYYKLEAEFWKKFHTLLTKEKSTRKKQK.

It belongs to the IS150/IS1296 orfA family.

The chain is Insertion element IS1296 uncharacterized 21.4 kDa protein from Mycoplasma mycoides subsp. mycoides SC.